A 214-amino-acid polypeptide reads, in one-letter code: Ribosomal RNA small subunit methyltransferase G (214 aa).

S-adenosyl-L-methionine-binding positions include Gly73, Leu78, 124–125, and Arg139; that span reads VE.

The protein belongs to the methyltransferase superfamily. RNA methyltransferase RsmG family.

It localises to the cytoplasm. It catalyses the reaction guanosine(527) in 16S rRNA + S-adenosyl-L-methionine = N(7)-methylguanosine(527) in 16S rRNA + S-adenosyl-L-homocysteine. Functionally, specifically methylates the N7 position of guanine in position 527 of 16S rRNA. This Aeromonas hydrophila subsp. hydrophila (strain ATCC 7966 / DSM 30187 / BCRC 13018 / CCUG 14551 / JCM 1027 / KCTC 2358 / NCIMB 9240 / NCTC 8049) protein is Ribosomal RNA small subunit methyltransferase G.